The sequence spans 735 residues: MPKNRTGRSREAREKKRKEEEEEIEELNSQIEALSETVDHFAELPLTQPTKSALKNAHFITLTEIQKQCIPSALKGRDILGAAKTGSGKTLAFIVPLIENLYRKKWTSLDGLGALVISPTRELAIQTFETLVKIGRLHSFSAGLIIGGNNYKEEKERLSRMNILVCTPGRLLQHIDQAVNFDTSGLQMLILDEADRILDMGFRTTLDAIVSSLPVHRQTMLFSATQTKSVKDLARLSLQNPDFISVHENDTSSTPSNLNQFYLTVPLTEKLDILFGFIRTHLKFKTIVFLSSCKQVRFVYETFRRMRPGISLLHLHGKQKQTTRTEVTAKFTSSRHVVLFCTDIVARGLDFPAVDWVIQLDAPEDVDTYIHRVGRTARYNRSGNALLLLLPSEEAFLKRLESKKIAVERINVKDGKKTSIRNQLQNLCFKDNDIKYIGQKAFISYLRSIYLQKDKDVFQLDKLPVEAFADSLGLPGTPKITFGKLKNHSQSQKDYNSSTSLDSSEESEVDVENKQNVRTKYDRIFERKNQDVLAAHRQRLVEVNSDEDDGDFLQVKRVDHDLPEETGERFNANSKRKEKMASSKKAMLKYKKSADKVYFDDEGNAIPFYAMNTEDTFQKAGDPAALIASHLAEERKALEKADITDKETVRQKQLEKKRRRQELERITQQDATPDEYVPEGPIVAFVDDELPETSKKQKKWFEDNDERDHGGIVEVENLNSLEDQEALALKLMGAA.

The tract at residues 1 to 24 is disordered; sequence MPKNRTGRSREAREKKRKEEEEEI. Residues 8–19 are compositionally biased toward basic and acidic residues; the sequence is RSREAREKKRKE. The Q motif motif lies at 39 to 67; it reads DHFAELPLTQPTKSALKNAHFITLTEIQK. One can recognise a Helicase ATP-binding domain in the interval 70–244; sequence IPSALKGRDI…RLSLQNPDFI (175 aa). ATP is bound at residue 83–90; it reads AKTGSGKT. The DEAD box signature appears at 192-195; it reads DEAD. The Helicase C-terminal domain occupies 270–424; the sequence is KLDILFGFIR…GKKTSIRNQL (155 aa). The segment at 483-513 is disordered; it reads GKLKNHSQSQKDYNSSTSLDSSEESEVDVEN. Phosphoserine occurs at positions 500, 503, 504, and 545. The disordered stretch occupies residues 652 to 712; the sequence is KQLEKKRRRQ…DNDERDHGGI (61 aa). Residues 692-711 are compositionally biased toward basic and acidic residues; that stretch reads ETSKKQKKWFEDNDERDHGG.

The protein belongs to the DEAD box helicase family. DDX10/DBP4 subfamily. In terms of assembly, interacts with the U3 and U14 snoRNAs. Associates with pre-ribosomal complexes.

The protein resides in the nucleus. It is found in the nucleolus. The enzyme catalyses ATP + H2O = ADP + phosphate + H(+). ATP-dependent RNA helicase required for ribosome biogenesis. Involved in the release of U14 snoRNA in pre-ribosomal complexes. Required for pre-rRNA cleavage at site A2. This Schizosaccharomyces pombe (strain 972 / ATCC 24843) (Fission yeast) protein is ATP-dependent RNA helicase dbp4 (dbp4).